We begin with the raw amino-acid sequence, 830 residues long: MKLSRRDFMKANAAVAAAAAAGMTIPTVAKAVGETTNAIKWDKAPCRFCGTGCGVLVGTQNGRIVASQGDPDSPVNRGLNCIKGYFLPKIMYGKDRLTQPLLRMKDGQYDKEGDFTPISWEKAFDIMELKFKNALKEKGPTAVGMFGSGQWTVWEGYAALKLLKGGFRSNNLDPNARHCMASSVVGFMRTFGMDEPMGCYDDIEEADAFVLWGSNMAEMHPVLWSRMTSRRLTNAHVRIAVLSTYEHRSFELADNPIVFTPQTDLVIMNYIANYIIQNNAVDKDFLAQHVNFRRGATDIGYGLRPTHPLEKAAKNPGSDASEPMSFEDFKTFVAEYTLEKAAKMSGVPEDQLESLAQLYADPKVKLVSYWTMGFNQHTRGVWANNMCYNLHLLTGKISTPGSGPFSLTGQPSACGTAREVGTFSHRLPADMVVTNEKHRQIAETTWQLPAGTIPEKVGLHAVAQDRALKDGTLNAYWVMCNNNMQAGPNINEERMPGWRDPRNFIVVSDPYPTISALSADLILPTSMWVEKEGAYGNAERRTQFWRQQVPSPGEAKSDLWQIVEFAKRFNVEEVWPAELVNQKPEYRGKNLYEVLFANDVVSKYPLSEIPDDQLNDEARDFGFYIQKGLFEEYASFGRGHAHDLAPFDVYHQVRGLRWPVVDGKETLWRYREGFDPFVPKGEEVRFYGKPDGKAVIFALPYEPAAESPDQEYDLWLSTGRVLEHWHTGSMTRRVPELHRAFPEAVLFIHPLDAKARGLHRGDKVKVISRRGEVISLVETRGRNRPPRGLVYMPFFDAAQLVNNLTLDATDPLSKETDFKKCAVKLERVVA.

A signal peptide (tat-type signal) is located at residues 1-31 (MKLSRRDFMKANAAVAAAAAAGMTIPTVAKA). The 4Fe-4S Mo/W bis-MGD-type domain occupies 39–95 (IKWDKAPCRFCGTGCGVLVGTQNGRIVASQGDPDSPVNRGLNCIKGYFLPKIMYGKD). The [4Fe-4S] cluster site is built by Cys-46, Cys-49, Cys-53, and Cys-81. Mo-bis(molybdopterin guanine dinucleotide)-binding positions include Lys-83, Gln-150, Asn-175, Cys-179, 212-219 (WGSNMAEM), 243-247 (STYEH), 262-264 (QTD), Met-372, Gln-376, Asn-482, 508-509 (SD), Lys-531, Asp-558, and 718-727 (TGRVLEHWHT). Residue Phe-794 participates in substrate binding. Mo-bis(molybdopterin guanine dinucleotide) contacts are provided by Asn-802 and Lys-819.

This sequence belongs to the prokaryotic molybdopterin-containing oxidoreductase family. NasA/NapA/NarB subfamily. In terms of assembly, component of the periplasmic nitrate reductase NapAB complex composed of NapA and NapB. [4Fe-4S] cluster serves as cofactor. The cofactor is Mo-bis(molybdopterin guanine dinucleotide). Predicted to be exported by the Tat system. The position of the signal peptide cleavage has not been experimentally proven.

The protein localises to the periplasm. It carries out the reaction 2 Fe(II)-[cytochrome] + nitrate + 2 H(+) = 2 Fe(III)-[cytochrome] + nitrite + H2O. Functionally, catalytic subunit of the periplasmic nitrate reductase complex NapAB. Receives electrons from NapB and catalyzes the reduction of nitrate to nitrite. The sequence is that of Periplasmic nitrate reductase from Yersinia pestis bv. Antiqua (strain Antiqua).